The following is a 146-amino-acid chain: Cystatin-C (146 aa).

A signal peptide spans 1 to 26 (MAGPLRAPLLLLAILAVALAVSPAAG). Ser43 is subject to Phosphoserine; by FAM20C. The Secondary area of contact signature appears at 81–85 (QIVAG). 2 cysteine pairs are disulfide-bonded: Cys99-Cys109 and Cys123-Cys143.

This sequence belongs to the cystatin family. Homodimer. In terms of processing, the Thr-25 variant is O-glycosylated with a core 1 or possibly core 8 glycan. The signal peptide of the O-glycosylated Thr-25 variant is cleaved between Ala-20 and Val-21. In terms of tissue distribution, expressed in submandibular and sublingual saliva but not in parotid saliva (at protein level). Expressed in various body fluids, such as the cerebrospinal fluid and plasma. Expressed in highest levels in the epididymis, vas deferens, brain, thymus, and ovary and the lowest in the submandibular gland.

Its subcellular location is the secreted. As an inhibitor of cysteine proteinases, this protein is thought to serve an important physiological role as a local regulator of this enzyme activity. In Homo sapiens (Human), this protein is Cystatin-C (CST3).